Reading from the N-terminus, the 159-residue chain is Mating-type P-specific polypeptide Pi (159 aa).

Positions M103–R159 form a DNA-binding region, homeobox; TALE-type; partial.

It belongs to the TALE/M-ATYP homeobox family.

The protein resides in the nucleus. Functionally, mating type proteins are sequence specific DNA-binding proteins that act as master switches in yeast differentiation by controlling gene expression in a cell type-specific fashion. Required for meiosis, but plays no role in conjugation. This chain is Mating-type P-specific polypeptide Pi (matPi), found in Schizosaccharomyces kambucha (Fission yeast).